A 364-amino-acid chain; its full sequence is Spermidine/putrescine import ATP-binding protein PotA (364 aa).

The region spanning 6–236 (IEIRQIYKSY…PANLHVAMFI (231 aa)) is the ABC transporter domain. 38–45 (GPSGCGKT) serves as a coordination point for ATP.

It belongs to the ABC transporter superfamily. Spermidine/putrescine importer (TC 3.A.1.11.1) family. In terms of assembly, the complex is composed of two ATP-binding proteins (PotA), two transmembrane proteins (PotB and PotC) and a solute-binding protein (PotD).

The protein resides in the cell inner membrane. It catalyses the reaction ATP + H2O + polyamine-[polyamine-binding protein]Side 1 = ADP + phosphate + polyamineSide 2 + [polyamine-binding protein]Side 1.. Functionally, part of the ABC transporter complex PotABCD involved in spermidine/putrescine import. Responsible for energy coupling to the transport system. This is Spermidine/putrescine import ATP-binding protein PotA from Legionella pneumophila (strain Lens).